Reading from the N-terminus, the 308-residue chain is Aspartate carbamoyltransferase catalytic subunit (308 aa).

2 residues coordinate carbamoyl phosphate: Arg57 and Thr58. L-aspartate is bound at residue Lys86. Carbamoyl phosphate contacts are provided by Arg107, His135, and Gln138. Residues Arg167 and Arg228 each coordinate L-aspartate. Carbamoyl phosphate is bound by residues Leu267 and Pro268.

Belongs to the aspartate/ornithine carbamoyltransferase superfamily. ATCase family. As to quaternary structure, heterooligomer of catalytic and regulatory chains.

It carries out the reaction carbamoyl phosphate + L-aspartate = N-carbamoyl-L-aspartate + phosphate + H(+). It participates in pyrimidine metabolism; UMP biosynthesis via de novo pathway; (S)-dihydroorotate from bicarbonate: step 2/3. In terms of biological role, catalyzes the condensation of carbamoyl phosphate and aspartate to form carbamoyl aspartate and inorganic phosphate, the committed step in the de novo pyrimidine nucleotide biosynthesis pathway. The chain is Aspartate carbamoyltransferase catalytic subunit from Methanosarcina barkeri (strain Fusaro / DSM 804).